Here is a 119-residue protein sequence, read N- to C-terminus: Phosphoribosyl-AMP cyclohydrolase (119 aa).

Position 72 (aspartate 72) interacts with Mg(2+). Cysteine 73 lines the Zn(2+) pocket. Mg(2+) is bound by residues aspartate 74 and aspartate 76. Residues cysteine 89 and cysteine 96 each contribute to the Zn(2+) site.

This sequence belongs to the PRA-CH family. As to quaternary structure, homodimer. Mg(2+) serves as cofactor. The cofactor is Zn(2+).

It localises to the cytoplasm. The enzyme catalyses 1-(5-phospho-beta-D-ribosyl)-5'-AMP + H2O = 1-(5-phospho-beta-D-ribosyl)-5-[(5-phospho-beta-D-ribosylamino)methylideneamino]imidazole-4-carboxamide. It functions in the pathway amino-acid biosynthesis; L-histidine biosynthesis; L-histidine from 5-phospho-alpha-D-ribose 1-diphosphate: step 3/9. Its function is as follows. Catalyzes the hydrolysis of the adenine ring of phosphoribosyl-AMP. In Methanocella arvoryzae (strain DSM 22066 / NBRC 105507 / MRE50), this protein is Phosphoribosyl-AMP cyclohydrolase.